Consider the following 376-residue polypeptide: Ribonucleoside-diphosphate reductase 1 subunit beta (376 aa).

Residues Asp85, Glu116, and His119 each coordinate Fe cation. Residue Tyr123 is part of the active site. 3 residues coordinate Fe cation: Glu205, Glu239, and His242.

This sequence belongs to the ribonucleoside diphosphate reductase small chain family. In terms of assembly, tetramer of two alpha (R1) and two beta (R2) subunits. The B1 protein is a dimer of alpha subunits. A radical transfer pathway occurs between Tyr-123 of R2 and R1. Requires Fe cation as cofactor.

It carries out the reaction a 2'-deoxyribonucleoside 5'-diphosphate + [thioredoxin]-disulfide + H2O = a ribonucleoside 5'-diphosphate + [thioredoxin]-dithiol. Its function is as follows. Provides the precursors necessary for DNA synthesis. Catalyzes the biosynthesis of deoxyribonucleotides from the corresponding ribonucleotides. R2 contains the tyrosyl radical required for catalysis. This is Ribonucleoside-diphosphate reductase 1 subunit beta (nrdB) from Escherichia coli O157:H7.